Here is a 286-residue protein sequence, read N- to C-terminus: NFU1 iron-sulfur cluster scaffold homolog, mitochondrial (286 aa).

Residues 1–66 constitute a mitochondrion transit peptide; the sequence is MSKLLTNTAL…RQIQLSGARN (66 aa). The interval 182–250 is nifU; it reads IKELLDTRIR…IPEVESVEQV (69 aa). Positions 219 and 222 each coordinate [4Fe-4S] cluster.

Belongs to the NifU family.

It localises to the mitochondrion. Molecular scaffold for [Fe-S] cluster assembly of mitochondrial iron-sulfur proteins. The polypeptide is NFU1 iron-sulfur cluster scaffold homolog, mitochondrial (Drosophila ananassae (Fruit fly)).